The chain runs to 706 residues: Maternal embryonic leucine zipper kinase (706 aa).

The Protein kinase domain occupies 11 to 265 (YAVHDELGSG…VKKLLEHDWL (255 aa)). ATP contacts are provided by residues 17 to 25 (LGSGGFGKV) and Lys40. Asp132 (proton acceptor) is an active-site residue. 3 disordered regions span residues 366-386 (LDKS…SSSD), 433-493 (FTGR…SRGP), and 506-555 (SVYT…IGSA). Polar residues-rich tracts occupy residues 447-461 (SVRS…SAAT) and 506-515 (SVYTTPNTRP). Positions 656 to 705 (QETVHGWMTVELEIVRLQMFDKVGIRRKRLKGDAFMYKKVCEKILQMAKI) constitute a KA1 domain.

The protein belongs to the protein kinase superfamily. CAMK Ser/Thr protein kinase family. SNF1 subfamily. Post-translationally, may be phosphorylated at Thr-169 by par-4 and/or autophosphorylated which likely results in its activation. Phosphorylation is not required for co-localization with the centrosome.

The protein localises to the cytoplasm. It is found in the cytoskeleton. The protein resides in the microtubule organizing center. Its subcellular location is the centrosome. The catalysed reaction is L-seryl-[protein] + ATP = O-phospho-L-seryl-[protein] + ADP + H(+). It catalyses the reaction L-threonyl-[protein] + ATP = O-phospho-L-threonyl-[protein] + ADP + H(+). In terms of biological role, serine/threonine-protein kinase involved in cell autonomous neuroblast asymmetric divisions that generate one precursor cell and one apoptotic cell by controlling spindle positioning, myosin distribution and the segregation of cell fate determinants. Plays a role in neural fate specification in several dopaminergic linages, acting in concert with ham-1. Involved in phosphorylation of multiple proteins associated with key developmental processes, including the cell cycle, apoptosis, endocytosis, and asymmetric cell division. Promotes cell shedding during embryogenesis, probably through the endocytosis-mediated removal of cell adhesion molecules such as hmp-1 from the cell surface. May act downstream of par-4/strd-1/mop-25 to regulate cell shedding. The sequence is that of Maternal embryonic leucine zipper kinase from Caenorhabditis elegans.